A 229-amino-acid chain; its full sequence is MAGSTGGPLIAPSILAADFARLADEAAAVNGADWLHVDVMDGHFVPNLTIGLPVVESLLAVTDIPMDCHLMIDNPDRWAPPYAEAGAYNVTFHAEATDNPVGVARDIRAAGAKAGISVKPGTPLEPYLDILPHFDTLLVMSVEPGFGGQRFIPEVLSKVRAVRKMVDAGELTILVEIDGGINDDTIEQAAEAGVDCFVAGSAVYGADDPAAAVAALRRQAGAASLHLSL.

Substrate is bound at residue serine 13. A divalent metal cation-binding residues include histidine 36, aspartate 38, and histidine 69. Aspartate 38 acts as the Proton acceptor in catalysis. Substrate contacts are provided by residues histidine 69, 145-148, 178-180, and 200-201; these read GFGG, DGG, and GS. Aspartate 178 is an a divalent metal cation binding site. Aspartate 178 serves as the catalytic Proton donor.

This sequence belongs to the ribulose-phosphate 3-epimerase family. It depends on a divalent metal cation as a cofactor.

The catalysed reaction is D-ribulose 5-phosphate = D-xylulose 5-phosphate. The protein operates within carbohydrate degradation. In terms of biological role, catalyzes the reversible epimerization of D-ribulose 5-phosphate to D-xylulose 5-phosphate. This is Ribulose-phosphate 3-epimerase from Mycobacterium bovis (strain ATCC BAA-935 / AF2122/97).